Here is a 562-residue protein sequence, read N- to C-terminus: MAVRASEISRVYEAYPEKKATLYFLVLGFLALIVGSLFGPFQALNYGNVDAYPLLKRLLPFVQSYYQGLTLHGVLNAIVFTQLFAQAIMVYLPARELNMRPNMGLMWLSWWMAFIGLVVAALPLLANEATVLYTFYPPLKGHWAFYLGASVFVLSTWVSIYIVLDLWRRWKAANPGKVTPLVTYMAVVFWLMWFLASLGLVLEAVLFLLPWSFGLVEGVDPLVARTLFWWTGHPIVYFWLLPAYAIIYTILPKQAGGKLVSDPMARLAFLLFLLLSTPVGFHHQFADPGIDPTWKMIHSVLTLFVAVPSLMTAFTVAASLEFAGRLRGGRGLFGWIRALPWDNPAFVAPVLGLLGFIPGGAGGIVNASFTLDYVVHNTAWVPGHFHLQVASLVTLTAMGSLYWLLPNLTGKPISDAQRRLGLAVVWLWFLGMMIMAVGLHWAGLLNVPRRAYIAQVPDAYPHAAVPMVFNVLAGIVLLVALLLFIYGLFSVLLSRERKPELAEAPLPFAEVISGPEDRRLVLAMDRIGFWFAVAAILVVLAYGPTLVQLFGHLNPVPGWRLW.

A helical transmembrane segment spans residues 21 to 41 (TLYFLVLGFLALIVGSLFGPF). His72 is a Fe(II)-heme a binding site. Transmembrane regions (helical) follow at residues 74-94 (VLNAIVFTQLFAQAIMVYLPA), 105-125 (LMWLSWWMAFIGLVVAALPLL), 144-164 (AFYLGASVFVLSTWVSIYIVL), 187-207 (VVFWLMWFLASLGLVLEAVLF), 227-247 (LFWWTGHPIVYFWLLPAYAII), 267-287 (LAFLLFLLLSTPVGFHHQFAD), 300-320 (VLTLFVAVPSLMTAFTVAASL), and 345-365 (AFVAPVLGLLGFIPGGAGGIV). Cu cation is bound by residues His233, Tyr237, His282, and His283. Positions 233–237 (HPIVY) form a cross-link, 1'-histidyl-3'-tyrosine (His-Tyr). His384 serves as a coordination point for heme a3. The next 4 membrane-spanning stretches (helical) occupy residues 385–405 (FHLQVASLVTLTAMGSLYWLL), 420–440 (LGLAVVWLWFLGMMIMAVGLH), 471–491 (VLAGIVLLVALLLFIYGLFSV), and 527–547 (IGFWFAVAAILVVLAYGPTLV). Fe(II)-heme a is bound at residue His386.

It belongs to the heme-copper respiratory oxidase family. Requires heme as cofactor. Cu cation is required as a cofactor.

The protein localises to the cell membrane. It carries out the reaction 4 Fe(II)-[cytochrome c] + O2 + 8 H(+)(in) = 4 Fe(III)-[cytochrome c] + 2 H2O + 4 H(+)(out). It functions in the pathway energy metabolism; oxidative phosphorylation. This chain is Cytochrome c oxidase subunit 1 (cbaA), found in Thermus thermophilus (strain ATCC 27634 / DSM 579 / HB8).